Here is a 138-residue protein sequence, read N- to C-terminus: MPTINQLIRKGRVSKVENSKSPALNKGYNSFKKEHTNVSSPQKRGVCTRVGTMTPKKPNSALRKYARVRLTNGIEVTAYIPGIGHNLQEHSVVLIRGGRVKDLPGVRYHIVRGALDTAGVENRAQGRSKYGTKKPKAK.

Positions 33–55 (KEHTNVSSPQKRGVCTRVGTMTP) are disordered.

The protein belongs to the universal ribosomal protein uS12 family. Part of the 30S ribosomal subunit. Contacts proteins S8 and S17. May interact with IF1 in the 30S initiation complex. Interacts with BrxC.

In terms of biological role, with S4 and S5 plays an important role in translational accuracy. Interacts with and stabilizes bases of the 16S rRNA that are involved in tRNA selection in the A site and with the mRNA backbone. Located at the interface of the 30S and 50S subunits, it traverses the body of the 30S subunit contacting proteins on the other side and probably holding the rRNA structure together. The combined cluster of proteins S8, S12 and S17 appears to hold together the shoulder and platform of the 30S subunit. The sequence is that of Small ribosomal subunit protein uS12 (rpsL) from Bacillus subtilis (strain 168).